The sequence spans 621 residues: Signal recognition particle receptor subunit alpha homolog (621 aa).

Residues 1–158 (MFDQLAVFTP…KKFEQYFRIK (158 aa)) form an SRX region. The interval 167–217 (HINPDNFTKNGSVPQSHNKNTKKKLRDTKGKKQSTGNVGSGRKWGRDGGML) is disordered. Over residues 171-183 (DNFTKNGSVPQSH) the composition is skewed to polar residues. The segment covering 185–198 (KNTKKKLRDTKGKK) has biased composition (basic residues). Phosphoserine is present on Ser239. The interval 398-620 (YVFSIVGVNG…SVKWAVNTLM (223 aa)) is NG domain. GTP contacts are provided by residues 404 to 411 (GVNGVGKS) and 510 to 514 (DTAGR). Residue Ser523 is modified to Phosphoserine. Residue 572–575 (SKCD) participates in GTP binding.

It belongs to the GTP-binding SRP family. Heterodimer of an alpha and a beta chain.

It is found in the endoplasmic reticulum membrane. Component of the SRP (signal recognition particle) receptor (SR). Ensures, in conjunction with the signal recognition particle, the correct targeting of the nascent secretory proteins to the endoplasmic reticulum membrane system. GTP hydrolysis may enhance the fidelity of and provide unidirectionality to the targeting reaction. It is important but not essential for cell growth. May be directly involved in mitochondrial protein import. The polypeptide is Signal recognition particle receptor subunit alpha homolog (SRP101) (Saccharomyces cerevisiae (strain ATCC 204508 / S288c) (Baker's yeast)).